Here is a 344-residue protein sequence, read N- to C-terminus: Adenosine deaminase (344 aa).

2 residues coordinate Zn(2+): His14 and His16. 3 residues coordinate substrate: His16, Asp18, and Gly177. His204 provides a ligand contact to Zn(2+). The Proton donor role is filled by Glu207. Residue Asp284 participates in Zn(2+) binding.

This sequence belongs to the metallo-dependent hydrolases superfamily. Adenosine and AMP deaminases family. Adenosine deaminase subfamily. Requires Zn(2+) as cofactor.

The enzyme catalyses adenosine + H2O + H(+) = inosine + NH4(+). It catalyses the reaction 2'-deoxyadenosine + H2O + H(+) = 2'-deoxyinosine + NH4(+). Catalyzes the hydrolytic deamination of adenosine and 2-deoxyadenosine. The chain is Adenosine deaminase from Haemophilus ducreyi (strain 35000HP / ATCC 700724).